The primary structure comprises 275 residues: Axin interactor, dorsalization-associated protein (275 aa).

Residues 97–107 (NLEFEEDEEEG) are compositionally biased toward acidic residues. Residues 97–125 (NLEFEEDEEEGGAGAGSPDSFPARVPGTL) form a disordered region. Residue serine 113 is modified to Phosphoserine. The segment at 123–190 (GTLLPRLPSE…RKEDTYVHFN (68 aa)) is axin-binding. The C2 Aida-type domain maps to 126–273 (LPRLPSEPGM…LYLHLHQTLH (148 aa)).

This sequence belongs to the AIDA family. In terms of assembly, interacts with AXIN1.

In terms of biological role, acts as a ventralizing factor during embryogenesis. Inhibits axin-mediated JNK activation by binding axin and disrupting axin homodimerization. This in turn antagonizes a Wnt/beta-catenin-independent dorsalization pathway activated by AXIN/JNK-signaling. This Macaca fascicularis (Crab-eating macaque) protein is Axin interactor, dorsalization-associated protein (AIDA).